Consider the following 118-residue polypeptide: Ribonuclease P protein component (118 aa).

It belongs to the RnpA family. In terms of assembly, consists of a catalytic RNA component (M1 or rnpB) and a protein subunit.

It carries out the reaction Endonucleolytic cleavage of RNA, removing 5'-extranucleotides from tRNA precursor.. RNaseP catalyzes the removal of the 5'-leader sequence from pre-tRNA to produce the mature 5'-terminus. It can also cleave other RNA substrates such as 4.5S RNA. The protein component plays an auxiliary but essential role in vivo by binding to the 5'-leader sequence and broadening the substrate specificity of the ribozyme. This chain is Ribonuclease P protein component, found in Enterococcus faecalis (strain ATCC 700802 / V583).